A 612-amino-acid chain; its full sequence is T-cell immunomodulatory protein (612 aa).

Residues 1 to 33 (MAAAGRLPSSWALFSPLLAGLALLGVGPVPARA) form the signal peptide. N-linked (GlcNAc...) asparagine glycosylation is found at Asn36, Asn95, Asn139, Asn146, Asn151, Asn176, Asn188, Asn226, and Asn243. An FG-GAP; atypical repeat occupies 258-293 (VVGQSAFADFDGDGHMDHLLPGCEDKNCQKSTIYLV). 3 N-linked (GlcNAc...) asparagine glycosylation sites follow: Asn353, Asn371, and Asn482. A helical transmembrane segment spans residues 567 to 587 (VLLTAIALIGVCVFILAIIGI).

Belongs to the TIP family. In terms of assembly, interacts with RUVBL1, RUVBL2 and alpha-tubulin. In terms of tissue distribution, ubiquitously expressed.

The protein resides in the secreted. It localises to the membrane. Modulator of T-cell function. Has a protective effect in graft versus host disease model. This Homo sapiens (Human) protein is T-cell immunomodulatory protein.